Here is a 178-residue protein sequence, read N- to C-terminus: ATP synthase subunit delta (178 aa).

This sequence belongs to the ATPase delta chain family. F-type ATPases have 2 components, F(1) - the catalytic core - and F(0) - the membrane proton channel. F(1) has five subunits: alpha(3), beta(3), gamma(1), delta(1), epsilon(1). F(0) has three main subunits: a(1), b(2) and c(10-14). The alpha and beta chains form an alternating ring which encloses part of the gamma chain. F(1) is attached to F(0) by a central stalk formed by the gamma and epsilon chains, while a peripheral stalk is formed by the delta and b chains.

Its subcellular location is the cell membrane. In terms of biological role, f(1)F(0) ATP synthase produces ATP from ADP in the presence of a proton or sodium gradient. F-type ATPases consist of two structural domains, F(1) containing the extramembraneous catalytic core and F(0) containing the membrane proton channel, linked together by a central stalk and a peripheral stalk. During catalysis, ATP synthesis in the catalytic domain of F(1) is coupled via a rotary mechanism of the central stalk subunits to proton translocation. This protein is part of the stalk that links CF(0) to CF(1). It either transmits conformational changes from CF(0) to CF(1) or is implicated in proton conduction. The polypeptide is ATP synthase subunit delta (Streptococcus equinus (Streptococcus bovis)).